The chain runs to 357 residues: Protein RecA (357 aa).

79-86 (GPESSGKT) is an ATP binding site.

This sequence belongs to the RecA family.

The protein localises to the cytoplasm. Its function is as follows. Can catalyze the hydrolysis of ATP in the presence of single-stranded DNA, the ATP-dependent uptake of single-stranded DNA by duplex DNA, and the ATP-dependent hybridization of homologous single-stranded DNAs. It interacts with LexA causing its activation and leading to its autocatalytic cleavage. The sequence is that of Protein RecA from Chloroherpeton thalassium (strain ATCC 35110 / GB-78).